A 108-amino-acid chain; its full sequence is Thiosulfate sulfurtransferase GlpE (108 aa).

One can recognise a Rhodanese domain in the interval R17 to A105. C65 serves as the catalytic Cysteine persulfide intermediate.

Belongs to the GlpE family.

Its subcellular location is the cytoplasm. It catalyses the reaction thiosulfate + hydrogen cyanide = thiocyanate + sulfite + 2 H(+). The catalysed reaction is thiosulfate + [thioredoxin]-dithiol = [thioredoxin]-disulfide + hydrogen sulfide + sulfite + 2 H(+). In terms of biological role, transferase that catalyzes the transfer of sulfur from thiosulfate to thiophilic acceptors such as cyanide or dithiols. May function in a CysM-independent thiosulfate assimilation pathway by catalyzing the conversion of thiosulfate to sulfite, which can then be used for L-cysteine biosynthesis. This chain is Thiosulfate sulfurtransferase GlpE, found in Salmonella agona (strain SL483).